The following is a 717-amino-acid chain: MSNDEFPTDQPAVVTCGLPYANGDLHVGHLRTYVDGDALSRALRRIGQQTAFVSGSDMHGTPVAVNAAEEGVAPREFALDFHETYAETFPQFNIEFDNYGHTDDETNVELTQEFVRSWVENDHVHEKEIEVAWDTEEDQPLPDRYVEGTCPYCGEQARGDECDEGCQRHLEPGEIEAPVSTLTGNPAEYRTREHKFLRLADFQEYLQGFLDRLEGTDNAQNQPREWIEGELQDLCITRDMDWGVDYPEDVDGGDELVLYVWVDAPIEYVASTKQYTERVGDDEYDWEAVWKIDSEERHGTEWDDEWADDSGEIIHVIGRDIIQHHAVFWPAMLRGAGYNEPRSILATGFVGIDGNALSTSRNRAVWADEYLDAGFHPDLFRYYIATGAQIDTDVDFSWDRFQERVNGELVGNVGNFIYRSLLFAERNYDGTPDAAVSDDVRGRIEDAIADFEAAVREYDIRELAEIAIELSNYGNEYIQRNEPWNLVDDDPEEAEQVIRDCVQLTKAVAVLMQPVLPGKAERLWGQLGEQGSVADVTLDSALEAPPAEFGEPAELFEQVEDDHIEALNEELQERVEEASEASAEASNEGGEAAGDEVDDGDVDTADLQPLVEDRISFEDFEGVDMRVGEIRSAEPVEGADKLLRLEVDIGHEVRQVVAGLRQLHDAEKLPGTRVILLANMEKAELFGIESNGMVLAAGDEADLLTTHEDAPLGTRIK.

Residues 19 to 29 (PYANGDLHVGH) carry the 'HIGH' region motif. Positions 150, 153, 162, and 166 each coordinate Zn(2+). Residues 356–360 (ALSTS) carry the 'KMSKS' region motif. Threonine 359 contributes to the ATP binding site. The segment at 573-603 (ERVEEASEASAEASNEGGEAAGDEVDDGDVD) is disordered. Over residues 580–590 (EASAEASNEGG) the composition is skewed to low complexity. Over residues 593 to 603 (AGDEVDDGDVD) the composition is skewed to acidic residues. The tRNA-binding domain maps to 619 to 717 (DFEGVDMRVG…EDAPLGTRIK (99 aa)).

Belongs to the class-I aminoacyl-tRNA synthetase family. MetG type 1 subfamily. Homodimer. Requires Zn(2+) as cofactor.

It localises to the cytoplasm. It carries out the reaction tRNA(Met) + L-methionine + ATP = L-methionyl-tRNA(Met) + AMP + diphosphate. In terms of biological role, is required not only for elongation of protein synthesis but also for the initiation of all mRNA translation through initiator tRNA(fMet) aminoacylation. This is Methionine--tRNA ligase from Haloarcula marismortui (strain ATCC 43049 / DSM 3752 / JCM 8966 / VKM B-1809) (Halobacterium marismortui).